The chain runs to 98 residues: Small ribosomal subunit protein bS6 (98 aa).

This sequence belongs to the bacterial ribosomal protein bS6 family.

Its function is as follows. Binds together with bS18 to 16S ribosomal RNA. This is Small ribosomal subunit protein bS6 from Staphylococcus epidermidis (strain ATCC 35984 / DSM 28319 / BCRC 17069 / CCUG 31568 / BM 3577 / RP62A).